The primary structure comprises 290 residues: Light-independent protochlorophyllide reductase iron-sulfur ATP-binding protein (290 aa).

ATP is bound by residues G10–T15 and K39. Residue S14 coordinates Mg(2+). 2 residues coordinate [4Fe-4S] cluster: C95 and C129. N180 to R181 is a binding site for ATP.

The protein belongs to the NifH/BchL/ChlL family. Homodimer. Protochlorophyllide reductase is composed of three subunits; ChlL, ChlN and ChlB. Requires [4Fe-4S] cluster as cofactor.

It is found in the plastid. The protein resides in the chloroplast. It carries out the reaction chlorophyllide a + oxidized 2[4Fe-4S]-[ferredoxin] + 2 ADP + 2 phosphate = protochlorophyllide a + reduced 2[4Fe-4S]-[ferredoxin] + 2 ATP + 2 H2O. The protein operates within porphyrin-containing compound metabolism; chlorophyll biosynthesis (light-independent). Functionally, component of the dark-operative protochlorophyllide reductase (DPOR) that uses Mg-ATP and reduced ferredoxin to reduce ring D of protochlorophyllide (Pchlide) to form chlorophyllide a (Chlide). This reaction is light-independent. The L component serves as a unique electron donor to the NB-component of the complex, and binds Mg-ATP. The polypeptide is Light-independent protochlorophyllide reductase iron-sulfur ATP-binding protein (Pyropia yezoensis (Susabi-nori)).